The following is a 462-amino-acid chain: Argininosuccinate lyase (462 aa).

It belongs to the lyase 1 family. Argininosuccinate lyase subfamily.

The protein localises to the cytoplasm. The enzyme catalyses 2-(N(omega)-L-arginino)succinate = fumarate + L-arginine. It functions in the pathway amino-acid biosynthesis; L-arginine biosynthesis; L-arginine from L-ornithine and carbamoyl phosphate: step 3/3. The protein is Argininosuccinate lyase of Rippkaea orientalis (strain PCC 8801 / RF-1) (Cyanothece sp. (strain PCC 8801)).